The chain runs to 135 residues: MAEKFDNLEEHLEKFVENIRQLGIIVSDFQPSSQAGLNQKLNFLVTGLQDIDKCRQQLHDITVPLEVFDYIDQGRNPQLYTKECLERALAKNEQVKGKIDTLKKFKSLLIQELSKVFPEDMAKYKAIRGEDHPPS.

It belongs to the Mediator complex subunit 10 family. As to quaternary structure, component of the Mediator complex.

It is found in the nucleus. Its function is as follows. Component of the Mediator complex, a coactivator involved in the regulated transcription of nearly all RNA polymerase II-dependent genes. Mediator functions as a bridge to convey information from gene-specific regulatory proteins to the basal RNA polymerase II transcription machinery. Mediator is recruited to promoters by direct interactions with regulatory proteins and serves as a scaffold for the assembly of a functional preinitiation complex with RNA polymerase II and the general transcription factors. The protein is Mediator of RNA polymerase II transcription subunit 10 (med10) of Xenopus tropicalis (Western clawed frog).